We begin with the raw amino-acid sequence, 336 residues long: Ornithine carbamoyltransferase (336 aa).

Carbamoyl phosphate contacts are provided by residues 56-59 (STRT), Gln-83, Arg-107, and 134-137 (HPTQ). Residues Asn-168, Asp-232, and 236-237 (SM) contribute to the L-ornithine site. Residues 274–275 (CL) and Arg-320 contribute to the carbamoyl phosphate site.

This sequence belongs to the aspartate/ornithine carbamoyltransferase superfamily. OTCase family.

It localises to the cytoplasm. The enzyme catalyses carbamoyl phosphate + L-ornithine = L-citrulline + phosphate + H(+). Its pathway is amino-acid biosynthesis; L-arginine biosynthesis; L-arginine from L-ornithine and carbamoyl phosphate: step 1/3. Reversibly catalyzes the transfer of the carbamoyl group from carbamoyl phosphate (CP) to the N(epsilon) atom of ornithine (ORN) to produce L-citrulline. The polypeptide is Ornithine carbamoyltransferase (Erwinia tasmaniensis (strain DSM 17950 / CFBP 7177 / CIP 109463 / NCPPB 4357 / Et1/99)).